The chain runs to 394 residues: Fructose-bisphosphate aldolase, chloroplastic (394 aa).

Residues 1 to 46 (MASASLLKTSPVLDNPEFLKGQTLRIPSVAGVRFTPSGSSSLTVRA) constitute a chloroplast transit peptide. Residues Arg93 and Lys183 each contribute to the substrate site. Catalysis depends on Glu223, which acts as the Proton acceptor. Lys265 functions as the Schiff-base intermediate with dihydroxyacetone-P in the catalytic mechanism.

Belongs to the class I fructose-bisphosphate aldolase family.

It localises to the plastid. The protein localises to the chloroplast. It carries out the reaction beta-D-fructose 1,6-bisphosphate = D-glyceraldehyde 3-phosphate + dihydroxyacetone phosphate. Its pathway is carbohydrate degradation; glycolysis; D-glyceraldehyde 3-phosphate and glycerone phosphate from D-glucose: step 4/4. The polypeptide is Fructose-bisphosphate aldolase, chloroplastic (Spinacia oleracea (Spinach)).